Consider the following 370-residue polypeptide: Histidinol-phosphate aminotransferase 2 (370 aa).

Lys230 carries the N6-(pyridoxal phosphate)lysine modification.

It belongs to the class-II pyridoxal-phosphate-dependent aminotransferase family. Histidinol-phosphate aminotransferase subfamily. Homodimer. Requires pyridoxal 5'-phosphate as cofactor.

The catalysed reaction is L-histidinol phosphate + 2-oxoglutarate = 3-(imidazol-4-yl)-2-oxopropyl phosphate + L-glutamate. The protein operates within amino-acid biosynthesis; L-histidine biosynthesis; L-histidine from 5-phospho-alpha-D-ribose 1-diphosphate: step 7/9. The polypeptide is Histidinol-phosphate aminotransferase 2 (Pseudomonas fluorescens (strain ATCC BAA-477 / NRRL B-23932 / Pf-5)).